The following is a 1387-amino-acid chain: Mediator of RNA polymerase II transcription subunit 13 (1387 aa).

3 disordered regions span residues 81–102, 354–400, and 620–676; these read ELNN…PEFS, HSAN…ESYS, and SVNS…DIPM. Composition is skewed to polar residues over residues 354-367 and 390-400; these read HSAN…STGE and SRQNFPTESYS.

Belongs to the Mediator complex subunit 13 family. In terms of assembly, component of the SRB8-11 complex, which itself associates with the Mediator complex.

The protein localises to the nucleus. In terms of biological role, component of the SRB8-11 complex. The SRB8-11 complex is a regulatory module of the Mediator complex which is itself involved in regulation of basal and activated RNA polymerase II-dependent transcription. The SRB8-11 complex may be involved in the transcriptional repression of a subset of genes regulated by Mediator. It may inhibit the association of the Mediator complex with RNA polymerase II to form the holoenzyme complex. In Kluyveromyces lactis (strain ATCC 8585 / CBS 2359 / DSM 70799 / NBRC 1267 / NRRL Y-1140 / WM37) (Yeast), this protein is Mediator of RNA polymerase II transcription subunit 13 (SSN2).